The chain runs to 105 residues: Large ribosomal subunit protein eL36 (105 aa).

Belongs to the eukaryotic ribosomal protein eL36 family. As to quaternary structure, component of the large ribosomal subunit.

It localises to the cytoplasm. It is found in the cytosol. In terms of biological role, component of the large ribosomal subunit. The ribosome is a large ribonucleoprotein complex responsible for the synthesis of proteins in the cell. This is Large ribosomal subunit protein eL36 (rpl36) from Danio rerio (Zebrafish).